Consider the following 228-residue polypeptide: Cytochrome P450 monooxygenase ataY (228 aa).

Cysteine 216 serves as a coordination point for heme.

It belongs to the cytochrome P450 family. The cofactor is heme.

Its pathway is mycotoxin biosynthesis. Its function is as follows. Cytochrome P450 monooxygenase; part of the gene cluster that mediates the biosynthesis of acetylaranotin, a member of the epipolythiodioxopiperazine (ETP) class of toxins characterized by a disulfide-bridged cyclic dipeptide. The first step of acetylaranotin biosynthesis is performed by the NRPS ataP which produces diketopiperazine cyclo-L-Phe-L-Phe via the condensation of 2 phenylalanines (L-Phe). The ataC domain of ataTC then catalyzes the formation of bishydroxylation of cyclo-L-Phe-L-Phe. The glutathione S-transferase domain ataG in ataIMG further catalyzes the conjugation of two glutathiones to the bishydroxylated intermediate. Next, the dipeptidase ataJ removes the Glu residues. The following step is performed by the carbon sulfur lyase domain ataI of ataIMG which may convert the bis-cysteinyl adduct to yield an epidithiol intermediate. The ataT domain from ataTC then catalyzes the oxidation of the free dithiols, followed by a cyclization step catalyzed by the cytochrome P450 ataF. AtaF probably acts as an epoxidase to promote a dual epoxidation formation at C8 and C9 along with C8' and C9', followed by the spontaneous nucleophilic attack of the amide nitrogens N10 and N10' to yield an intermediate with the pyrrolidine partial structure. The final steps of acetylaranotin biosynthesis involve the acetylation and ring rearrangement of an epitetrathiodiketopiperazine intermediate to produce acetylaranotin. AtaH probably catalyzes the acetylation of epitetrathiodiketopiperazine to produce a diacetate and ataY is responsible for the formation of the dihydrooxepin moiety that converts the diacetate intermediate to acetylaranotin via acetylapoaranotin. Both enzymes could function independently in the absence of the other. The acetylaranotin bis-thiomethyltransferase ataS located outside of acetylaranotin gene cluster is the main thiomethyltransferase responsible for converting acetylaranotin and its related intermediates to their methylated forms. The sequence is that of Cytochrome P450 monooxygenase ataY from Aspergillus terreus (strain NIH 2624 / FGSC A1156).